Reading from the N-terminus, the 1173-residue chain is BRCA2-interacting transcriptional repressor EMSY (1173 aa).

The 85-residue stretch at 16–100 (CKRILRKLEL…EWSIEGRRLV (85 aa)) folds into the ENT domain. Residues 149–177 (STTSTPPSASAPSSSSAAVKSPRPASPAS) are compositionally biased toward low complexity. Disordered stretches follow at residues 149-179 (STTSTPPSASAPSSSSAAVKSPRPASPASNV), 191-216 (KSVSCSDEDEKPRKRRRTSSSSSSPV), 676-720 (NRSA…DAPP), 797-816 (SAEQRESPEPSGQSAAESDA), 905-998 (RVCE…GAQV), 1020-1046 (PRAPVSSSSSSEAALKLQAESSSEKPS), and 1139-1173 (DYTSQRLDEEQAMEQEVDSSNDEGAAASPSADQSQ). The segment covering 683–693 (TTSTHTSAAAA) has biased composition (low complexity). Low complexity-rich tracts occupy residues 911–921 (SSSSSSSSSSS) and 937–953 (SSSSAPATAASANTPHT). Polar residues-rich tracts occupy residues 961 to 976 (QAPTTHNRPNTHTQLS) and 989 to 998 (SSKTSSGAQV). Positions 1025-1040 (SSSSSSEAALKLQAES) are enriched in low complexity. Residues 1148–1159 (EQAMEQEVDSSN) are compositionally biased toward acidic residues.

Homodimer.

It is found in the nucleus. Its function is as follows. Regulator which is able to repress transcription, possibly via its interaction with a multiprotein chromatin remodeling complex that modifies the chromatin. The sequence is that of BRCA2-interacting transcriptional repressor EMSY from Danio rerio (Zebrafish).